Here is a 501-residue protein sequence, read N- to C-terminus: MGSELKSTSPLAVKYDLSQKIMQHLDRHLIFPLLEFLSLRQTHDPKELLQAKYDLLKDTNMTDYVANLWTNLHGGHTDEDMANAFAEKRRSVLQELSELEEEVQGILGVLENPDLIAALRQDKGQNLQHLQEHYNITPERIAVLYKFAQFQYNCGNYGGASDLLYHFRAFSKDPELNASATWGKFASEILTVDWDGAMEELGKLREMVDSKSFKDSAVQLRNRTWLLHWSLFPLFNHANGCDTLCDLFFYTPYLNTIQTSCPWLLRYLTVAVVTNQNNANQKPRNPRQSYQRRMRDLVRIISQENYEYSDPVTSFISALYTEVDFEKAQHCLRECEEVLKTDFFLVSLCDHFLEGARKLLAEAYCRIHSVISVDVLANKLEMDSAQLIQLVENRNNPSVAAASNVAADQSTEDESIESTSTNVVADDLITEAETATEAEEPEPEVQFGFKAKLDGESIIIEHPTYSAFQQIIDRTKSLSFESQNLEQSLAKSISELKHATV.

The 179-residue stretch at 245 to 423 (CDLFFYTPYL…ESIESTSTNV (179 aa)) folds into the PCI domain. 2 positions are modified to phosphoserine: serine 477 and serine 479.

Belongs to the eIF-3 subunit E family. As to quaternary structure, component of the eukaryotic translation initiation factor 3 (eIF-3) complex. The eIF-3 complex appears to include tif32/eif3a, SPAC25G10.08/eif3b, tif33/eif3c, SPBC4C3.07/eif3f, tif35/eif3g and sum1/eif3i. This set of common subunits may also associate exclusively with either moe1/eif3d and int6/eif3e, or with SPAC821.05/eif3h and SPAC1751.03/eif3m. The eIF-3 complex may also include SPAC3A12.13c/eif3j. Also interacts with the proteasome via rpn501/rpn502.

The protein resides in the cytoplasm. Component of the eukaryotic translation initiation factor 3 (eIF-3) complex, which is involved in protein synthesis of a specialized repertoire of mRNAs and, together with other initiation factors, stimulates binding of mRNA and methionyl-tRNAi to the 40S ribosome. The eIF-3 complex specifically targets and initiates translation of a subset of mRNAs involved in cell proliferation (Potential). Required for maintaining the basal level of atf1 and for transcriptional activation of core environmental stress response genes (CESR genes) in response to histidine starvation. May positively regulate proteasome activity. Required for nuclear localization of the proteasome subunit rpn501/rpn502. The polypeptide is Eukaryotic translation initiation factor 3 subunit E (int6) (Schizosaccharomyces pombe (strain 972 / ATCC 24843) (Fission yeast)).